Consider the following 165-residue polypeptide: Shikimate kinase (165 aa).

11 to 16 (GAGKTT) serves as a coordination point for ATP. Threonine 15 serves as a coordination point for Mg(2+). Substrate-binding residues include aspartate 33, arginine 57, and glycine 78. Arginine 116 lines the ATP pocket. Position 134 (arginine 134) interacts with substrate.

It belongs to the shikimate kinase family. In terms of assembly, monomer. Mg(2+) serves as cofactor.

The protein resides in the cytoplasm. It carries out the reaction shikimate + ATP = 3-phosphoshikimate + ADP + H(+). It functions in the pathway metabolic intermediate biosynthesis; chorismate biosynthesis; chorismate from D-erythrose 4-phosphate and phosphoenolpyruvate: step 5/7. Catalyzes the specific phosphorylation of the 3-hydroxyl group of shikimic acid using ATP as a cosubstrate. This is Shikimate kinase from Bacillus mycoides (strain KBAB4) (Bacillus weihenstephanensis).